The primary structure comprises 91 residues: Small ribosomal subunit protein uS15c (91 aa).

Belongs to the universal ribosomal protein uS15 family. Part of the 30S ribosomal subunit.

The protein localises to the plastid. It is found in the chloroplast. The polypeptide is Small ribosomal subunit protein uS15c (rps15) (Ceratophyllum demersum (Rigid hornwort)).